The chain runs to 391 residues: MNHFDTIIIGGGPAGMMATISSSFYGQKTLLLEKNKRLGKKLAGTGGGRCNVTNNGNLDDLMAGIPGNGRFLYSVFSQFDNHDIINFFTENGVKLKVEDHGRVFPVTDKSRTIIEALEKKIAELGGTVITNTEIVSVKKTDELFTVRSSDQAWTCQKLIVTTGGKSYPSTGSTGFGHDIARHFKHTVTDLEAAESPLLTDFPHKALQGISLDDVTLSYGKHIITHDLLFTHFGLSGPAALRLSSFVKGGETIYLDVLPQMSQQDLADFLEEHREKSLKNCLKILLPERIADFFTQPFPEKVKQLNLSEKEALIKQIKELPISVTGKMSLAKSFVTKGGVSLKEINPKTLESKLVPGLHFAGEVLDINAHTGGFNITSALCTGWVAGSLHYD.

FAD-binding residues include Ala14, Glu33, Ile134, Glu362, Asn374, and Ile375.

It belongs to the BaiN/RdsA family. In terms of assembly, monomer. FAD serves as cofactor.

Its function is as follows. Flavoprotein that probably catalyzes the condensation of two molecules of aminoacetone to yield 3,6-dimethyl-2,5-dihydropyrazine, which is subsequently oxidized to 2,5-dimethylpyrazine. It could be involved in a microbial defense mechanism related to aminoacetone catabolism through a pathway yielding dimethylpyrazine derivatives instead of methylglyoxal. It has also low aminoacetone oxidase activity, and can produce hydrogen peroxide from aminoacetone. In addition, it shows very low L-amino acid oxidase activity, and can produce hydrogen peroxide from peptone and from seven amino acids, L-aspartate, L-tryptophan, L-lysine, L-isoleucine, L-arginine, L-asparagine and L-glutamine. It cannot use L-malate, oxaloacetate or alpha-aminobutyrate. Plays a role in antioxidant defense. The protein is Aminoacetone oxidase of Streptococcus cristatus.